A 164-amino-acid polypeptide reads, in one-letter code: Lipoprotein signal peptidase (164 aa).

Transmembrane regions (helical) follow at residues M2–L22, V40–F60, W70–A90, and L99–G119. Residues D123 and D142 contribute to the active site. The helical transmembrane segment at F138–I158 threads the bilayer.

The protein belongs to the peptidase A8 family.

Its subcellular location is the cell inner membrane. The catalysed reaction is Release of signal peptides from bacterial membrane prolipoproteins. Hydrolyzes -Xaa-Yaa-Zaa-|-(S,diacylglyceryl)Cys-, in which Xaa is hydrophobic (preferably Leu), and Yaa (Ala or Ser) and Zaa (Gly or Ala) have small, neutral side chains.. It participates in protein modification; lipoprotein biosynthesis (signal peptide cleavage). This protein specifically catalyzes the removal of signal peptides from prolipoproteins. The polypeptide is Lipoprotein signal peptidase (Tolumonas auensis (strain DSM 9187 / NBRC 110442 / TA 4)).